The primary structure comprises 416 residues: Lactose permease (416 aa).

At 1-13 (MKLSELAPRERHN) the chain is on the cytoplasmic side. Residues 14-34 (FIYFMLFFFFYYFIMSAYFPF) form a helical membrane-spanning segment. Residues 35-50 (FPVWLAEVNHLTKTET) lie on the Periplasmic side of the membrane. The helical transmembrane segment at 51–71 (GIVFSCISLFAIIFQPVFGLI) threads the bilayer. At 72-80 (SDKLGLRKH) the chain is on the cytoplasmic side. Residues 81–101 (LLWTITILLILFAPFFIFVFS) form a helical membrane-spanning segment. Residue P102 is a topological domain, periplasmic. The helical transmembrane segment at 103–123 (LLQMNIMAGALVGGVYLGIVF) threads the bilayer. Residues 124 to 149 (SSRSGAVEAYIERVSRANRFEYGKVR) lie on the Cytoplasmic side of the membrane. Helical transmembrane passes span 150-170 (VSGCVGWALCASITGILFSID) and 171-191 (PNITFWIASGFALILGVLLWV). The Cytoplasmic segment spans residues 192-223 (SKPESSNSAEVIDALGANRQAFSMRTAAELFR). Residues 224-244 (MPRFWGFIIYVVGVASVYDVF) form a helical membrane-spanning segment. At 245-267 (DQQFANFFKGFFSSPQRGTEVFG) the chain is on the periplasmic side. The helical transmembrane segment at 268-288 (FVTTGGELLNALIMFCAPAII) threads the bilayer. At 289–295 (NRIGAKN) the chain is on the cytoplasmic side. 2 helical membrane-spanning segments follow: residues 296 to 316 (ALLIAGLIMSVRILGSSFATS) and 317 to 337 (AVEVIILKMLHMFEIPFLLVG). At 338 to 353 (TFKYISSAFKGKLSAT) the chain is on the cytoplasmic side. The helical transmembrane segment at 354 to 374 (LFLIGFNLSKQLSSVVLSAWV) threads the bilayer. Topologically, residues 375–384 (GRMYDTVGFH) are periplasmic. A helical transmembrane segment spans residues 385-405 (QAYLILGCITLSFTVISLFTL). Residues 406–416 (KGSKTLLPATA) lie on the Cytoplasmic side of the membrane.

The protein belongs to the major facilitator superfamily. Oligosaccharide:H(+) symporter (OHS) (TC 2.A.1.5) family.

The protein localises to the cell inner membrane. It catalyses the reaction lactose(in) + H(+)(in) = lactose(out) + H(+)(out). Its function is as follows. Responsible for transport of beta-galactosides into the cell, with the concomitant import of a proton (symport system). The polypeptide is Lactose permease (lacY) (Klebsiella oxytoca).